The chain runs to 55 residues: Conotoxin Cal6.40 (55 aa).

An N-terminal signal peptide occupies residues 1 to 21; the sequence is MSGSGVLLLTLLLLVPLSALA. 3 disulfide bridges follow: C24–C36, C29–C41, and C35–C50.

Expressed by the venom duct.

Its subcellular location is the secreted. In terms of biological role, probable neurotoxin. In Californiconus californicus (California cone), this protein is Conotoxin Cal6.40.